Here is a 448-residue protein sequence, read N- to C-terminus: Probable ribonuclease FAU-1 (448 aa).

The protein belongs to the FAU-1 family.

In terms of biological role, probable RNase involved in rRNA stability through maturation and/or degradation of precursor rRNAs. Binds to RNA in loop regions with AU-rich sequences. This Pyrobaculum calidifontis (strain DSM 21063 / JCM 11548 / VA1) protein is Probable ribonuclease FAU-1.